A 461-amino-acid polypeptide reads, in one-letter code: L-seryl-tRNA(Sec) selenium transferase (461 aa).

Position 294 is an N6-(pyridoxal phosphate)lysine (K294).

The protein belongs to the SelA family. Pyridoxal 5'-phosphate is required as a cofactor.

It is found in the cytoplasm. The catalysed reaction is L-seryl-tRNA(Sec) + selenophosphate + H(+) = L-selenocysteinyl-tRNA(Sec) + phosphate. The protein operates within aminoacyl-tRNA biosynthesis; selenocysteinyl-tRNA(Sec) biosynthesis; selenocysteinyl-tRNA(Sec) from L-seryl-tRNA(Sec) (bacterial route): step 1/1. Functionally, converts seryl-tRNA(Sec) to selenocysteinyl-tRNA(Sec) required for selenoprotein biosynthesis. This is L-seryl-tRNA(Sec) selenium transferase from Actinobacillus pleuropneumoniae serotype 7 (strain AP76).